The following is a 344-amino-acid chain: Dihydroorotate dehydrogenase (quinone) (344 aa).

FMN contacts are provided by residues alanine 61–lysine 65 and threonine 85. Substrate is bound at residue lysine 65. Asparagine 110 to phenylalanine 114 serves as a coordination point for substrate. FMN contacts are provided by asparagine 138 and asparagine 171. Substrate is bound at residue asparagine 171. The active-site Nucleophile is serine 174. Position 176 (asparagine 176) interacts with substrate. Residues lysine 216 and threonine 244 each contribute to the FMN site. Asparagine 245 to threonine 246 is a substrate binding site. FMN contacts are provided by residues glycine 267, glycine 296, and tyrosine 317–serine 318.

Belongs to the dihydroorotate dehydrogenase family. Type 2 subfamily. In terms of assembly, monomer. FMN is required as a cofactor.

It localises to the cell membrane. The catalysed reaction is (S)-dihydroorotate + a quinone = orotate + a quinol. It participates in pyrimidine metabolism; UMP biosynthesis via de novo pathway; orotate from (S)-dihydroorotate (quinone route): step 1/1. Its function is as follows. Catalyzes the conversion of dihydroorotate to orotate with quinone as electron acceptor. The polypeptide is Dihydroorotate dehydrogenase (quinone) (Psychrobacter cryohalolentis (strain ATCC BAA-1226 / DSM 17306 / VKM B-2378 / K5)).